The primary structure comprises 184 residues: Jacalin-related lectin 2 (184 aa).

The 160-residue stretch at 4-163 folds into the Jacalin-type lectin domain; sequence KIKIGPVGTD…LQNIGVYLQP (160 aa).

Belongs to the jacalin lectin family.

The chain is Jacalin-related lectin 2 (JAL2) from Arabidopsis thaliana (Mouse-ear cress).